The primary structure comprises 250 residues: Probable transcriptional regulatory protein SAV_6832 (250 aa).

This sequence belongs to the TACO1 family.

The protein resides in the cytoplasm. The sequence is that of Probable transcriptional regulatory protein SAV_6832 from Streptomyces avermitilis (strain ATCC 31267 / DSM 46492 / JCM 5070 / NBRC 14893 / NCIMB 12804 / NRRL 8165 / MA-4680).